The sequence spans 467 residues: Argininosuccinate lyase (467 aa).

It belongs to the lyase 1 family. Argininosuccinate lyase subfamily.

It localises to the cytoplasm. The enzyme catalyses 2-(N(omega)-L-arginino)succinate = fumarate + L-arginine. The protein operates within amino-acid biosynthesis; L-arginine biosynthesis; L-arginine from L-ornithine and carbamoyl phosphate: step 3/3. This is Argininosuccinate lyase from Rhizobium etli (strain CIAT 652).